A 580-amino-acid chain; its full sequence is Transcription factor coe2-B (580 aa).

The segment at 60–63 is interaction with DNA; the sequence is RKSN. The segment at 148–167 adopts a C5-type zinc-finger fold; it reads CRVLLTHEVMCSRCCEKKSC. Interaction with DNA regions lie at residues 194-201 and 233-236; these read NCLKTAGN and NNSK. An IPT/TIG domain is found at 259–341; it reads PCIKAISPSE…CKGAPGRFIY (83 aa). A disordered region spans residues 455 to 492; the sequence is IRNTSSISPRGYSSSSTPQQSNYSTPSNSMNGYSNVPM. Low complexity predominate over residues 459–481; it reads SSISPRGYSSSSTPQQSNYSTPS. Residues 482-492 show a composition bias toward polar residues; that stretch reads NSMNGYSNVPM.

The protein belongs to the COE family. As to expression, in embryos, expressed in precursors of primary neurons. In adults, expressed at high levels in the brain, and at low levels in the somatic muscles, testis, and possibly the spleen.

It localises to the nucleus. In terms of biological role, may play a pivotal role in the transcriptional cascade that specifies primary neurons in embryos. Stabilizes the higher neural potential of selected progenitor cells that express neurog2/X-ngnr-1 by maintaining Delta-Notch signaling. Thus ensures the transition between neural competence and irreversible commitment to a neural fate. Also promotes neuronal differentiation by activating neurod1 expression, directly or indirectly. The polypeptide is Transcription factor coe2-B (Xenopus laevis (African clawed frog)).